The chain runs to 969 residues: UvrABC system protein A (969 aa).

32 to 39 (GLSGSGKS) is a binding site for ATP. The C4-type zinc finger occupies 258 to 286 (CPNGHPLAVDDLEPRSFSFNSPYGACPEC). ABC transporter domains follow at residues 316-599 (WSAG…KDSI) and 619-948 (VDRK…KFLA). 652-659 (GVSGSGKS) contributes to the ATP binding site. The C4-type zinc finger occupies 751-777 (CEACTGDGTIKIEMNFLPDVYVPCEVC).

It belongs to the ABC transporter superfamily. UvrA family. As to quaternary structure, forms a heterotetramer with UvrB during the search for lesions.

The protein resides in the cytoplasm. In terms of biological role, the UvrABC repair system catalyzes the recognition and processing of DNA lesions. UvrA is an ATPase and a DNA-binding protein. A damage recognition complex composed of 2 UvrA and 2 UvrB subunits scans DNA for abnormalities. When the presence of a lesion has been verified by UvrB, the UvrA molecules dissociate. This Mycobacterium leprae (strain TN) protein is UvrABC system protein A.